The sequence spans 100 residues: NADH-quinone oxidoreductase subunit K (100 aa).

3 consecutive transmembrane segments (helical) span residues 4-24, 29-49, and 63-83; these read ITYY…GVLV, LVVF…FVAF, and FFVI…VIAV.

The protein belongs to the complex I subunit 4L family. NDH-1 is composed of 14 different subunits. Subunits NuoA, H, J, K, L, M, N constitute the membrane sector of the complex.

The protein resides in the cell inner membrane. The enzyme catalyses a quinone + NADH + 5 H(+)(in) = a quinol + NAD(+) + 4 H(+)(out). Its function is as follows. NDH-1 shuttles electrons from NADH, via FMN and iron-sulfur (Fe-S) centers, to quinones in the respiratory chain. The immediate electron acceptor for the enzyme in this species is believed to be ubiquinone. Couples the redox reaction to proton translocation (for every two electrons transferred, four hydrogen ions are translocated across the cytoplasmic membrane), and thus conserves the redox energy in a proton gradient. In Myxococcus xanthus (strain DK1622), this protein is NADH-quinone oxidoreductase subunit K.